A 171-amino-acid polypeptide reads, in one-letter code: PIDD1 alternative open reading frame protein (171 aa).

Disordered regions lie at residues 1–22 (MSGL…RAGG) and 76–156 (ILAS…LCPA). A compositionally biased stretch (low complexity) spans 84-99 (GPSAAGGHPGPAASEP).

Interacts with calpain-2 catalytic subunit CAPN2. Cleaved in vitro following UV irradiation to induce caspase-mediated apoptosis and this cleavage is inhibited by a broad-spectrum caspase inhibitor.

Its subcellular location is the cytoplasm. The protein resides in the cytoskeleton. The chain is PIDD1 alternative open reading frame protein from Homo sapiens (Human).